The primary structure comprises 127 residues: Mediator of RNA polymerase II transcription subunit 31 (127 aa).

This sequence belongs to the Mediator complex subunit 31 family. As to quaternary structure, component of the Mediator complex.

The protein localises to the nucleus. Functionally, component of the Mediator complex, a coactivator involved in the regulated transcription of nearly all RNA polymerase II-dependent genes. Mediator functions as a bridge to convey information from gene-specific regulatory proteins to the basal RNA polymerase II transcription machinery. Mediator is recruited to promoters by direct interactions with regulatory proteins and serves as a scaffold for the assembly of a functional preinitiation complex with RNA polymerase II and the general transcription factors. The protein is Mediator of RNA polymerase II transcription subunit 31 (SOH1) of Eremothecium gossypii (strain ATCC 10895 / CBS 109.51 / FGSC 9923 / NRRL Y-1056) (Yeast).